A 289-amino-acid chain; its full sequence is Lipoyl synthase 2 (289 aa).

7 residues coordinate [4Fe-4S] cluster: Cys43, Cys48, Cys54, Cys69, Cys73, Cys76, and Ser282. The 217-residue stretch at 55–271 (YAQKTATFLL…GAVARDLGFA (217 aa)) folds into the Radical SAM core domain.

Belongs to the radical SAM superfamily. Lipoyl synthase family. The cofactor is [4Fe-4S] cluster.

It localises to the cytoplasm. The catalysed reaction is [[Fe-S] cluster scaffold protein carrying a second [4Fe-4S](2+) cluster] + N(6)-octanoyl-L-lysyl-[protein] + 2 oxidized [2Fe-2S]-[ferredoxin] + 2 S-adenosyl-L-methionine + 4 H(+) = [[Fe-S] cluster scaffold protein] + N(6)-[(R)-dihydrolipoyl]-L-lysyl-[protein] + 4 Fe(3+) + 2 hydrogen sulfide + 2 5'-deoxyadenosine + 2 L-methionine + 2 reduced [2Fe-2S]-[ferredoxin]. It participates in protein modification; protein lipoylation via endogenous pathway; protein N(6)-(lipoyl)lysine from octanoyl-[acyl-carrier-protein]: step 2/2. Its function is as follows. Catalyzes the radical-mediated insertion of two sulfur atoms into the C-6 and C-8 positions of the octanoyl moiety bound to the lipoyl domains of lipoate-dependent enzymes, thereby converting the octanoylated domains into lipoylated derivatives. The polypeptide is Lipoyl synthase 2 (Gloeobacter violaceus (strain ATCC 29082 / PCC 7421)).